The sequence spans 65 residues: LTCLNCPEVYCRRFQICRDGEKICFKKFDQRNLLGKRYRRGCAATCPEAKPREIVQCCSTDKCNR.

Disulfide bonds link C3/C24, C6/C11, C17/C42, C46/C57, and C58/C63.

The protein belongs to the three-finger toxin family. Ancestral subfamily. Orphan group II sub-subfamily. In terms of tissue distribution, expressed by the venom gland.

Its subcellular location is the secreted. Binds with low affinity to muscular (alpha-1-beta-1-delta-epsilon/CHRNA1-CHRNB1-CHRND-CHRNE) and very low affinity to neuronal (alpha-7/CHRNA7) nicotinic acetylcholine receptor (nAChR). The polypeptide is Weak neurotoxin 7 (Naja naja (Indian cobra)).